The following is a 366-amino-acid chain: tRNA(Met) cytidine acetate ligase (366 aa).

Residues 7–20 (IAEF…HQYL), Gly96, Asn152, and Arg175 each bind ATP.

The protein belongs to the TmcAL family.

Its subcellular location is the cytoplasm. It carries out the reaction cytidine(34) in elongator tRNA(Met) + acetate + ATP = N(4)-acetylcytidine(34) in elongator tRNA(Met) + AMP + diphosphate. Catalyzes the formation of N(4)-acetylcytidine (ac(4)C) at the wobble position of elongator tRNA(Met), using acetate and ATP as substrates. First activates an acetate ion to form acetyladenylate (Ac-AMP) and then transfers the acetyl group to tRNA to form ac(4)C34. This is tRNA(Met) cytidine acetate ligase from Streptococcus equi subsp. zooepidemicus (strain MGCS10565).